We begin with the raw amino-acid sequence, 156 residues long: Crossover junction endodeoxyribonuclease RuvC (156 aa).

Catalysis depends on residues Asp9, Glu69, and Asp141. Residues Asp9, Glu69, and Asp141 each contribute to the Mg(2+) site.

Belongs to the RuvC family. As to quaternary structure, homodimer which binds Holliday junction (HJ) DNA. The HJ becomes 2-fold symmetrical on binding to RuvC with unstacked arms; it has a different conformation from HJ DNA in complex with RuvA. In the full resolvosome a probable DNA-RuvA(4)-RuvB(12)-RuvC(2) complex forms which resolves the HJ. Mg(2+) serves as cofactor.

It localises to the cytoplasm. It catalyses the reaction Endonucleolytic cleavage at a junction such as a reciprocal single-stranded crossover between two homologous DNA duplexes (Holliday junction).. In terms of biological role, the RuvA-RuvB-RuvC complex processes Holliday junction (HJ) DNA during genetic recombination and DNA repair. Endonuclease that resolves HJ intermediates. Cleaves cruciform DNA by making single-stranded nicks across the HJ at symmetrical positions within the homologous arms, yielding a 5'-phosphate and a 3'-hydroxyl group; requires a central core of homology in the junction. The consensus cleavage sequence is 5'-(A/T)TT(C/G)-3'. Cleavage occurs on the 3'-side of the TT dinucleotide at the point of strand exchange. HJ branch migration catalyzed by RuvA-RuvB allows RuvC to scan DNA until it finds its consensus sequence, where it cleaves and resolves the cruciform DNA. This is Crossover junction endodeoxyribonuclease RuvC from Acaryochloris marina (strain MBIC 11017).